We begin with the raw amino-acid sequence, 640 residues long: Threonine--tRNA ligase (640 aa).

One can recognise a TGS domain in the interval 1–61; the sequence is MPAITLPDGS…DADARLRFIT (61 aa). Residues 243 to 536 are catalytic; it reads DHRKIGRQMD…LIENCAGRFP (294 aa). 3 residues coordinate Zn(2+): cysteine 336, histidine 387, and histidine 513.

This sequence belongs to the class-II aminoacyl-tRNA synthetase family. As to quaternary structure, homodimer. Zn(2+) serves as cofactor.

Its subcellular location is the cytoplasm. It catalyses the reaction tRNA(Thr) + L-threonine + ATP = L-threonyl-tRNA(Thr) + AMP + diphosphate + H(+). Catalyzes the attachment of threonine to tRNA(Thr) in a two-step reaction: L-threonine is first activated by ATP to form Thr-AMP and then transferred to the acceptor end of tRNA(Thr). Also edits incorrectly charged L-seryl-tRNA(Thr). In Acidiphilium cryptum (strain JF-5), this protein is Threonine--tRNA ligase.